Here is a 152-residue protein sequence, read N- to C-terminus: Phospholipase A2 (152 aa).

Residues 1–20 form the signal peptide; that stretch reads MAACHRILLLLSVAVASGAA. Intrachain disulfides connect Cys39–Cys96, Cys53–Cys142, Cys55–Cys70, Cys69–Cys124, Cys75–Cys149, Cys76–Cys117, Cys85–Cys110, and Cys103–Cys115. Residues Gly56 and Gly58 each contribute to the Ca(2+) site. The active site involves His73. Asp74 is a binding site for Ca(2+). Asp118 is a catalytic residue.

This sequence belongs to the phospholipase A2 family. As to expression, expressed by the venom gland. Heavily expressed in the venom gland transcriptome.

The protein localises to the secreted. The catalysed reaction is a 1,2-diacyl-sn-glycero-3-phosphocholine + H2O = a 1-acyl-sn-glycero-3-phosphocholine + a fatty acid + H(+). Its function is as follows. PA2 catalyzes the calcium-dependent hydrolysis of the 2-acyl groups in 3-sn-phosphoglycerides. In Meiacanthus atrodorsalis (Forktail blenny), this protein is Phospholipase A2.